A 289-amino-acid chain; its full sequence is MSAKYPIISITGSSGAGTTTVKDTFEKIFKRENISASFIEGDAFHRYDRETMRSKIAEEKARGVDFTHFSAEANELEILESVFAEYGRRGVGRTRHYVHDDAEAVKFGSDPGTFTDWEEFRDSDLLFYEGLHGCAVTDTINLAQHCDLKIGVVPVINLEWIQKIHRDKATRGYSTEAVTDTILRRMPDYVHYICPQFSLTDINFQRVPIVDTSNPFIARWIPTPAESILVIRFAKPQSIDFPYLLSMLHNSYMSRANSIVVPGDKLDLAMQLIFTPLIHKLLERKHRMS.

ATP is bound at residue 12–20 (GSSGAGTTT).

The protein belongs to the phosphoribulokinase family.

It carries out the reaction D-ribulose 5-phosphate + ATP = D-ribulose 1,5-bisphosphate + ADP + H(+). The protein operates within carbohydrate biosynthesis; Calvin cycle. The polypeptide is Phosphoribulokinase (cbbP) (Sinorhizobium medicae (strain WSM419) (Ensifer medicae)).